The sequence spans 752 residues: Multifunctional tryptophan biosynthesis protein (752 aa).

One can recognise a Glutamine amidotransferase type-1 domain in the interval 3-202 (FTLLIDNYDS…IQMKGGKWGG (200 aa)). 58–60 (GPG) lines the L-glutamine pocket. Residue Cys86 is the Nucleophile; for GATase activity of the active site. 136 to 137 (SL) contacts L-glutamine. Residues His176 and Glu178 each act as for GATase activity in the active site. Positions 231-495 (ILNKIHAQRL…DTKAFLRSLI (265 aa)) are indole-3-glycerol phosphate synthase. Residues 509 to 752 (LVKICGIRST…VEAFVKAVRG (244 aa)) form an N-(5'-phosphoribosyl)anthranilate isomerase region.

It catalyses the reaction N-(5-phospho-beta-D-ribosyl)anthranilate = 1-(2-carboxyphenylamino)-1-deoxy-D-ribulose 5-phosphate. The enzyme catalyses 1-(2-carboxyphenylamino)-1-deoxy-D-ribulose 5-phosphate + H(+) = (1S,2R)-1-C-(indol-3-yl)glycerol 3-phosphate + CO2 + H2O. The catalysed reaction is chorismate + L-glutamine = anthranilate + pyruvate + L-glutamate + H(+). It participates in amino-acid biosynthesis; L-tryptophan biosynthesis; L-tryptophan from chorismate: step 1/5. Its pathway is amino-acid biosynthesis; L-tryptophan biosynthesis; L-tryptophan from chorismate: step 3/5. The protein operates within amino-acid biosynthesis; L-tryptophan biosynthesis; L-tryptophan from chorismate: step 4/5. In terms of biological role, trifunctional enzyme bearing the Gln amidotransferase (GATase) domain of anthranilate synthase, indole-glycerolphosphate synthase, and phosphoribosylanthranilate isomerase activities. This chain is Multifunctional tryptophan biosynthesis protein (TRP1), found in Cryptococcus neoformans var. grubii serotype A (strain H99 / ATCC 208821 / CBS 10515 / FGSC 9487) (Filobasidiella neoformans var. grubii).